The chain runs to 1064 residues: WD repeat-containing protein on Y chromosome (1064 aa).

WD repeat units lie at residues 153 to 197 (EEVT…IRTA), 326 to 365 (RVPL…EPSA), 369 to 408 (GHNG…LLQT), 459 to 498 (THAA…RKII), 511 to 550 (IIDI…VVRN), 598 to 638 (FHTD…RRYS), 746 to 785 (KTGD…EAEK), and 827 to 866 (AHLK…LGTL). Basic and acidic residues predominate over residues 914 to 924 (PAKRAEVKAPE). Disordered regions lie at residues 914–935 (PAKR…QTDD) and 1023–1064 (GSAL…QQSE). Positions 925-935 (DRDEETAQTDD) are enriched in acidic residues.

The chain is WD repeat-containing protein on Y chromosome from Drosophila pseudoobscura pseudoobscura (Fruit fly).